The following is a 376-amino-acid chain: 23S rRNA (uracil(747)-C(5))-methyltransferase RlmC (376 aa).

The [4Fe-4S] cluster site is built by C3, C11, C14, and C87. 4 residues coordinate S-adenosyl-L-methionine: Q212, F241, E262, and N307. The Nucleophile role is filled by C334.

It belongs to the class I-like SAM-binding methyltransferase superfamily. RNA M5U methyltransferase family. RlmC subfamily.

The catalysed reaction is uridine(747) in 23S rRNA + S-adenosyl-L-methionine = 5-methyluridine(747) in 23S rRNA + S-adenosyl-L-homocysteine + H(+). Functionally, catalyzes the formation of 5-methyl-uridine at position 747 (m5U747) in 23S rRNA. The protein is 23S rRNA (uracil(747)-C(5))-methyltransferase RlmC of Yersinia pseudotuberculosis serotype O:1b (strain IP 31758).